Consider the following 142-residue polypeptide: Large ribosomal subunit protein uL11 (142 aa).

Belongs to the universal ribosomal protein uL11 family. As to quaternary structure, part of the ribosomal stalk of the 50S ribosomal subunit. Interacts with L10 and the large rRNA to form the base of the stalk. L10 forms an elongated spine to which L12 dimers bind in a sequential fashion forming a multimeric L10(L12)X complex. In terms of processing, one or more lysine residues are methylated.

Functionally, forms part of the ribosomal stalk which helps the ribosome interact with GTP-bound translation factors. In Maricaulis maris (strain MCS10) (Caulobacter maris), this protein is Large ribosomal subunit protein uL11.